The sequence spans 86 residues: Small nuclear ribonucleoprotein F (86 aa).

Ser2 is subject to N-acetylserine. Residues 6-78 (NPKPFLNGLT…VLYIRGVEEE (73 aa)) form the Sm domain.

The protein belongs to the snRNP Sm proteins family. SmF/LSm6 subfamily. In terms of assembly, core component of the spliceosomal U1, U2, U4 and U5 small nuclear ribonucleoproteins (snRNPs), the building blocks of the spliceosome. Most spliceosomal snRNPs contain a common set of Sm proteins, SNRPB, SNRPD1, SNRPD2, SNRPD3, SNRPE, SNRPF and SNRPG that assemble in a heptameric protein ring on the Sm site of the small nuclear RNA to form the core snRNP. Component of the U1 snRNP. The U1 snRNP is composed of the U1 snRNA and the 7 core Sm proteins SNRPB, SNRPD1, SNRPD2, SNRPD3, SNRPE, SNRPF and SNRPG, and at least three U1 snRNP-specific proteins SNRNP70/U1-70K, SNRPA/U1-A and SNRPC/U1-C. Component of the U4/U6-U5 tri-snRNP complex composed of the U4, U6 and U5 snRNAs and at least PRPF3, PRPF4, PRPF6, PRPF8, PRPF31, SNRNP200, TXNL4A, SNRNP40, SNRPB, SNRPD1, SNRPD2, SNRPD3, SNRPE, SNRPF, SNRPG, DDX23, CD2BP2, PPIH, SNU13, EFTUD2, SART1 and USP39, plus LSM2, LSM3, LSM4, LSM5, LSM6, LSM7 and LSM8. Component of the U7 snRNP complex, or U7 Sm protein core complex, that is composed of the U7 snRNA and at least LSM10, LSM11, SNRPB, SNRPD3, SNRPE, SNRPF and SNRPG; the complex does not contain SNRPD1 and SNRPD2. Component of the minor spliceosome, which splices U12-type introns. Part of the SMN-Sm complex that contains SMN1, GEMIN2/SIP1, DDX20/GEMIN3, GEMIN4, GEMIN5, GEMIN6, GEMIN7, GEMIN8, STRAP/UNRIP and the Sm proteins SNRPB, SNRPD1, SNRPD2, SNRPD3, SNRPE, SNRPF and SNRPG; catalyzes core snRNPs assembly. Forms a 6S pICln-Sm complex composed of CLNS1A/pICln, SNRPD1, SNRPD2, SNRPE, SNRPF and SNRPG; ring-like structure where CLNS1A/pICln mimics additional Sm proteins and which is unable to assemble into the core snRNP. Interacts with GEMIN2 (via N-terminus); the interaction is direct. Interacts with SNRPD2; the interaction is direct. Interacts with SNRPE; the interaction is direct.

Its subcellular location is the cytoplasm. It is found in the cytosol. The protein localises to the nucleus. Its function is as follows. Plays a role in pre-mRNA splicing as a core component of the spliceosomal U1, U2, U4 and U5 small nuclear ribonucleoproteins (snRNPs), the building blocks of the spliceosome. Component of both the pre-catalytic spliceosome B complex and activated spliceosome C complexes. As a component of the minor spliceosome, involved in the splicing of U12-type introns in pre-mRNAs. As part of the U7 snRNP it is involved in histone 3'-end processing. The sequence is that of Small nuclear ribonucleoprotein F (SNRPF) from Homo sapiens (Human).